The following is a 153-amino-acid chain: D-amino acid oxidase regulator (153 aa).

The segment at 1 to 25 (MLEKLMGADSLQLFRSRYTLGKIYF) is involved in targeting to the mitochondrion. Residues 138–153 (KDQSCNHKEITSTKAE) form an interaction with DAO region.

As to quaternary structure, interacts with DAO (D-amino acid oxidase); the interaction is direct, can occur in the presence or absence of FAD or substrate bound to DAO, and results in a complex containing two DAO homodimers and two DAOA monomers. Interacts with DDO (D-aspartate oxidase); the interaction is direct. Interacts wih SOD1; the interaction is direct. Interacts with MSRB2; the interaction is direct. As to expression, expressed in the amygdala and in astrocytes of the cortex (at protein level). Expressed in the caudate nucleus, spinal cord and testis.

The protein localises to the cytoplasm. It is found in the cytosol. The protein resides in the golgi apparatus. Its subcellular location is the mitochondrion. In terms of biological role, may suppress DAO (D-amino acid oxidase) and SOD1 activity and promote their degradation. Has conversely also been suggested to function as a DAO activator. May stimulate the degradation of DDO (D-aspartate oxidase). May play a role in mitochondrial fission. In Homo sapiens (Human), this protein is D-amino acid oxidase regulator (DAOA).